The chain runs to 259 residues: Ribonuclease HII (259 aa).

Residues 1–26 (MLSTPPKLPSAHGPVHFPRRSGTGMN) form a disordered region. Residues 55–243 (APVAGADEAG…VRAQQLVLFE (189 aa)) form the RNase H type-2 domain. Residues Asp-61, Glu-62, and Asp-152 each coordinate a divalent metal cation.

It belongs to the RNase HII family. The cofactor is Mn(2+). It depends on Mg(2+) as a cofactor.

It is found in the cytoplasm. It carries out the reaction Endonucleolytic cleavage to 5'-phosphomonoester.. Functionally, endonuclease that specifically degrades the RNA of RNA-DNA hybrids. This is Ribonuclease HII from Azorhizobium caulinodans (strain ATCC 43989 / DSM 5975 / JCM 20966 / LMG 6465 / NBRC 14845 / NCIMB 13405 / ORS 571).